A 604-amino-acid polypeptide reads, in one-letter code: uncharacterized protein (604 aa).

The N-terminal stretch at 1–40 (MWLQQRIKVFPGLLSSSWARRVLAVSGFLVIIYWYIFSGS) is a signal peptide. At 41 to 563 (HYRSFWYSGK…EEHMAKQYRG (523 aa)) the chain is on the extracellular side. Residue N337 is glycosylated (N-linked (GlcNAc...) asparagine). Residues 564–584 (LPFLFWFSVASLITLFHLFLF) form a helical membrane-spanning segment. At 585–604 (KLIYNEYCGPGAKPLFRSKV) the chain is on the cytoplasmic side.

Its subcellular location is the membrane. This is an uncharacterized protein from Xenopus laevis (African clawed frog).